The primary structure comprises 302 residues: uncharacterized protein (302 aa).

The active site involves E47.

Belongs to the PhzF family.

This is an uncharacterized protein from Mesorhizobium japonicum (strain LMG 29417 / CECT 9101 / MAFF 303099) (Mesorhizobium loti (strain MAFF 303099)).